Consider the following 175-residue polypeptide: Disulfide bond formation protein B (175 aa).

Over 1-13 (MTAFTRFAHSRAS) the chain is Cytoplasmic. A helical membrane pass occupies residues 14–30 (WLILTGSAIALEAAALY). The Periplasmic portion of the chain corresponds to 31–48 (FQYVMKLDPCVMCIYQRL). A disulfide bridge connects residues Cys-40 and Cys-43. The chain crosses the membrane as a helical span at residues 49 to 64 (AVFGILAAGLIGMTAP). Topologically, residues 65–71 (KYRIVRI) are cytoplasmic. A helical membrane pass occupies residues 72–89 (LGALGWAVSATWGLKLAL). Topologically, residues 90-144 (ALVDMQNNPSPFSTCSFLPEFPAWMPLHEWFPSVMLPTGMCTDVPWQFMGVTMAE) are periplasmic. A disulfide bridge links Cys-104 with Cys-130. Residues 145–163 (WMVVAFSGYLVALLLFIVP) traverse the membrane as a helical segment. The Cytoplasmic segment spans residues 164 to 175 (ILSGSNKPSLYK).

This sequence belongs to the DsbB family.

Its subcellular location is the cell inner membrane. Functionally, required for disulfide bond formation in some periplasmic proteins. Acts by oxidizing the DsbA protein. In Shewanella sp. (strain MR-4), this protein is Disulfide bond formation protein B.